A 239-amino-acid polypeptide reads, in one-letter code: ATP synthase subunit a (239 aa).

Transmembrane regions (helical) follow at residues 13 to 33 (IWFD…VFAF), 75 to 95 (FHLM…LGLV), 113 to 133 (DPIV…FFGM), 174 to 194 (GNIF…ASVG), and 208 to 230 (WVAF…SMVY).

The protein belongs to the ATPase A chain family. In terms of assembly, F-type ATPases have 2 components, CF(1) - the catalytic core - and CF(0) - the membrane proton channel. CF(1) has five subunits: alpha(3), beta(3), gamma(1), delta(1), epsilon(1). CF(0) has three main subunits: a(1), b(2) and c(9-12). The alpha and beta chains form an alternating ring which encloses part of the gamma chain. CF(1) is attached to CF(0) by a central stalk formed by the gamma and epsilon chains, while a peripheral stalk is formed by the delta and b chains.

Its subcellular location is the cell membrane. In terms of biological role, key component of the proton channel; it plays a direct role in the translocation of protons across the membrane. This chain is ATP synthase subunit a, found in Enterococcus faecalis (strain ATCC 700802 / V583).